We begin with the raw amino-acid sequence, 175 residues long: Translation initiation factor IF-3 (175 aa).

The protein belongs to the IF-3 family. As to quaternary structure, monomer.

The protein resides in the cytoplasm. Functionally, IF-3 binds to the 30S ribosomal subunit and shifts the equilibrium between 70S ribosomes and their 50S and 30S subunits in favor of the free subunits, thus enhancing the availability of 30S subunits on which protein synthesis initiation begins. In Blochmanniella floridana, this protein is Translation initiation factor IF-3.